The chain runs to 1110 residues: Nitric oxide synthase 3 (1110 aa).

The tract at residues 1–74 (MGNFKSVGQE…PPEGPKFPRV (74 aa)) is disordered. Residues 15–27 (CGLGLGLGLGLCG) show a composition bias toward gly residues. The segment covering 31 to 40 (PASPAPVSAS) has biased composition (low complexity). The segment covering 47-69 (SSPPLPLPAPEHSPPLTRPPEGP) has biased composition (pro residues). 2 residues coordinate Zn(2+): Cys-97 and Cys-102. The segment at 101–489 (RCLGSLVFPR…PDPWKGSGTK (389 aa)) is interaction with NOSIP. Ser-105 contacts (6R)-L-erythro-5,6,7,8-tetrahydrobiopterin. Ser-117 bears the Phosphoserine mark. Residue Cys-187 participates in heme b binding. Positions 250, 359, 360, and 364 each coordinate L-arginine. Arg-368 is a binding site for (6R)-L-erythro-5,6,7,8-tetrahydrobiopterin. Asn-369 contributes to the L-arginine binding site. (6R)-L-erythro-5,6,7,8-tetrahydrobiopterin is bound by residues Ala-449, Trp-450, and Phe-463. Position 478 (Tyr-478) interacts with heme b. Thr-498 is modified (phosphothreonine). Residues Ser-529, Glu-530, Thr-531, Arg-533, Ser-575, and Thr-576 each coordinate FMN. 3 positions are modified to phosphoserine: Ser-618, Ser-636, and Ser-641. 4 residues coordinate FMN: Ser-657, Cys-664, Glu-690, and Gln-694. Arg-779 contacts NADP(+). FAD is bound at residue His-801. Positions 821-848 (EDPPPPAESVAVEQLEKGSPGGPPPGWV) are disordered. Ser-839 is modified (phosphoserine). The FAD site is built by Arg-941, Tyr-943, Ser-944, Thr-959, Ala-961, Tyr-965, Val-978, Cys-979, and Ser-980. NADP(+)-binding residues include Thr-1019, Arg-1052, Ser-1081, Arg-1082, and Lys-1088.

Belongs to the NOS family. In terms of assembly, homodimer. Interacts with NOSIP and NOSTRIN. Interacts with HSP90AB1. Forms a complex with ASL, ASS1 and SLC7A1; the complex regulates cell-autonomous L-arginine synthesis and citrulline recycling while channeling extracellular L-arginine to nitric oxide synthesis pathway. Requires heme b as cofactor. FAD serves as cofactor. It depends on FMN as a cofactor. The cofactor is (6R)-L-erythro-5,6,7,8-tetrahydrobiopterin.

The protein localises to the membrane. It is found in the caveola. It localises to the cytoplasm. Its subcellular location is the cytoskeleton. The protein resides in the golgi apparatus. The protein localises to the cell membrane. It carries out the reaction 2 L-arginine + 3 NADPH + 4 O2 + H(+) = 2 L-citrulline + 2 nitric oxide + 3 NADP(+) + 4 H2O. Its activity is regulated as follows. Stimulated by calcium/calmodulin. Inhibited by NOSIP and NOSTRIN. Its function is as follows. Produces nitric oxide (NO) which is implicated in vascular smooth muscle relaxation through a cGMP-mediated signal transduction pathway. NO mediates vascular endothelial growth factor (VEGF)-induced angiogenesis in coronary vessels and promotes blood clotting through the activation of platelets. The sequence is that of Nitric oxide synthase 3 (NOS3) from Cavia porcellus (Guinea pig).